Reading from the N-terminus, the 302-residue chain is Glutaminase (302 aa).

Substrate contacts are provided by Ser61, Asn111, Glu155, Asn162, Tyr186, Tyr238, and Val256.

This sequence belongs to the glutaminase family. As to quaternary structure, homotetramer.

The enzyme catalyses L-glutamine + H2O = L-glutamate + NH4(+). The polypeptide is Glutaminase (Pseudomonas aeruginosa (strain LESB58)).